A 163-amino-acid chain; its full sequence is Protein LOL5 (163 aa).

Composition is skewed to polar residues over residues 1–25 (MSQL…QPQS) and 33–44 (LQPQHPPSSTAH). A disordered region spans residues 1–51 (MSQLPLASQATTTDLVSTTAMQPQSEGIVDESLQPQHPPSSTAHDSPCLQD). 2 putative zinc finger regions span residues 70 to 100 (QMVC…MNYV) and 108 to 138 (KVHC…VTEI).

The protein localises to the nucleus. In terms of biological role, involved in plant growth and disease resistance. The protein is Protein LOL5 (LOL5) of Oryza sativa subsp. japonica (Rice).